The primary structure comprises 98 residues: MKVTTIIAALLSVAVVDAQNNAQCRKLGLPCHATKTIPYVVKKGDTLTHIAHDIYKRKVGICDLAYTNHIGKNPNLIYAGQTLLIPTDCKTIDDGSCL.

Positions 1–18 (MKVTTIIAALLSVAVVDA) are cleaved as a signal peptide. Cystine bridges form between C31–C89 and C62–C97. One can recognise a LysM domain in the interval 37 to 85 (IPYVVKKGDTLTHIAHDIYKRKVGICDLAYTNHIGKNPNLIYAGQTLLI). The chitin site is built by G44, T48, N75, and I77.

Belongs to the secreted LysM effector family. In terms of assembly, forms homodimers in a chitin-independent manner through interactions at the N-termini of Mgx1LysM monomers. Homodimers are further polymerized in a chitin-dependent manner.

It localises to the secreted. The protein resides in the cell wall. Its function is as follows. Secreted effector that enables the plant pathogenic fungus to manipulate host defenses for successful infection. Binds chitin and suppresses the chitin-induced reactive oxygen species (ROS) burst. Chitin-induced polymerization of homodimers forms a contiguous Mg1LysM highly oligomeric super-complexe that is anchored to the chitin in the fungal cell wall to prevent hydrolysis by host chitinases. The polypeptide is Secreted LysM effector Mgx1LysM (Zymoseptoria tritici (strain ST99CH_3D7)).